A 518-amino-acid chain; its full sequence is Retinal dehydrogenase 2 (518 aa).

A Phosphotyrosine modification is found at Y168. Residues 184 to 186 (IPW), 210 to 213 (KPAE), and 264 to 266 (STE) contribute to the NAD(+) site. Catalysis depends on E286, which acts as the Proton acceptor. The active-site Nucleophile is the C320. A Phosphoserine modification is found at S351. Residues 366–370 (KQYNK) and E417 each bind NAD(+).

It belongs to the aldehyde dehydrogenase family. Homotetramer. In terms of tissue distribution, found in testis and less abundantly in lung, brain, heart, liver and kidney.

It is found in the cytoplasm. It catalyses the reaction retinal + NAD(+) + H2O = retinoate + NADH + 2 H(+). The enzyme catalyses all-trans-retinal + NAD(+) + H2O = all-trans-retinoate + NADH + 2 H(+). The catalysed reaction is all-trans-13,14-dihydroretinal + NAD(+) + H2O = all-trans-13,14-dihydroretinoate + NADH + 2 H(+). The protein operates within cofactor metabolism; retinol metabolism. Its function is as follows. Catalyzes the NAD-dependent oxidation of aldehyde substrates, such as all-trans-retinal and all-trans-13,14-dihydroretinal, to their corresponding carboxylic acids, all-trans-retinoate and all-trans-13,14-dihydroretinoate, respectively. Retinoate signaling is critical for the transcriptional control of many genes, for instance it is crucial for initiation of meiosis in both male and female. Recognizes retinal as substrate, both in its free form and when bound to cellular retinol-binding protein. Lacks activity with benzaldehyde, acetaldehyde and octanal. Displays complete lack of activity with citral. The sequence is that of Retinal dehydrogenase 2 (Aldh1a2) from Rattus norvegicus (Rat).